The following is a 630-amino-acid chain: Probable potassium transport system protein Kup (630 aa).

12 consecutive transmembrane segments (helical) span residues Leu-17 to Leu-37, Pro-51 to Ile-71, Ile-105 to Val-125, Pro-144 to Ile-164, Leu-175 to Ile-195, Val-218 to Leu-238, Tyr-255 to Leu-275, Pro-283 to Ala-303, Ile-344 to Phe-364, Tyr-374 to Val-394, Leu-402 to Asn-422, and Gln-428 to Tyr-448.

This sequence belongs to the HAK/KUP transporter (TC 2.A.72) family.

It is found in the cell inner membrane. It carries out the reaction K(+)(in) + H(+)(in) = K(+)(out) + H(+)(out). Transport of potassium into the cell. Likely operates as a K(+):H(+) symporter. The sequence is that of Probable potassium transport system protein Kup from Burkholderia pseudomallei (strain 1710b).